A 280-amino-acid chain; its full sequence is UDP-2,3-diacylglucosamine pyrophosphatase LpxI (280 aa).

Substrate-binding positions include Ala12, 74-75 (NV), Gln169, 187-188 (TD), Lys214, and 226-233 (LPTIGVAT).

This sequence belongs to the LpxI family. In terms of assembly, homodimer. Mg(2+) serves as cofactor.

The protein localises to the cell inner membrane. It carries out the reaction UDP-2-N,3-O-bis[(3R)-3-hydroxytetradecanoyl]-alpha-D-glucosamine + H2O = 2-N,3-O-bis[(3R)-3-hydroxytetradecanoyl]-alpha-D-glucosaminyl 1-phosphate + UMP + 2 H(+). It functions in the pathway glycolipid biosynthesis; lipid IV(A) biosynthesis; lipid IV(A) from (3R)-3-hydroxytetradecanoyl-[acyl-carrier-protein] and UDP-N-acetyl-alpha-D-glucosamine: step 4/6. With respect to regulation, inhibited by high concentrations of Cu(2+) and Zn(2+). Completely inhibited by EDTA in vitro. Its function is as follows. Hydrolyzes the pyrophosphate bond of UDP-2,3-diacylglucosamine to form 2,3-diacylglucosamine 1-phosphate (lipid X) and UMP by catalyzing the attack of water at the beta-P atom. Involved in the biosynthesis of lipid A, a phosphorylated glycolipid that anchors the lipopolysaccharide to the outer membrane of the cell. Can functionally complement lpxH deficiency in E.coli. Cannot use CDP-diacylglycerol as substrate. This is UDP-2,3-diacylglucosamine pyrophosphatase LpxI from Caulobacter vibrioides (strain ATCC 19089 / CIP 103742 / CB 15) (Caulobacter crescentus).